The chain runs to 397 residues: Subtilisin-like serine protease Pen ch 13.0101 (397 aa).

A signal peptide spans 1 to 19; sequence MGFLKVLATSLATLAVVDA. The propeptide at 20–115 is removed in mature form; that stretch reads GTLLTASNTD…IEPDMIVNAT (96 aa). In terms of domain architecture, Inhibitor I9 spans 35–113; sequence SYIVVMNDDV…KYIEPDMIVN (79 aa). N-linked (GlcNAc...) asparagine glycosylation occurs at asparagine 113. Residues 125 to 397 form the Peptidase S8 domain; sequence SWGLARISSK…SKLLYNGINV (273 aa). Active-site charge relay system residues include aspartate 157 and histidine 188. N-linked (GlcNAc...) asparagine glycans are attached at residues asparagine 249 and asparagine 284. Serine 343 serves as the catalytic Charge relay system.

Belongs to the peptidase S8 family.

It localises to the secreted. Its function is as follows. Serine protease. The polypeptide is Subtilisin-like serine protease Pen ch 13.0101 (Penicillium rubens).